The chain runs to 389 residues: MTDAQIRSLIGRPPASGAWREGDPVADRLFASVGGVDLEAGGRIPSVRVAYETFGERDPDGGNAVLVLHALTGDSHLRGPAGPGQPTGGWWSGIVGPGLAIDTDRWFVVAPNMLGGCQGTTGPASLAPDGAEWGARFPFITIRDQVAVQAALADALGIDVWAAVVGGSMGGMQALEWGVGLPGRMRRLAILAAPAIASADQIALNSVQAEAIRMDPAYRDGDYFDAADGDGPHRGLALARRMALLNYRSPDELNQRFSRSWQSGISPMGDEGRYAVESYLDFHGNKFTRRFDATSYIRLIDAMSSHDVGRDRGGVEAALASVRAATLVVGIDSDRLFPVPDQRLVARHVPGSVDGGEVVVISSDYGHDGFLIENEAVGRALARLLDTPA.

Residues Asn-63–Leu-371 enclose the AB hydrolase-1 domain. Residue Ser-168 is the Nucleophile of the active site. Arg-240 is a substrate binding site. Residues Asp-334 and His-367 contribute to the active site. Substrate is bound at residue Asp-368.

The protein belongs to the AB hydrolase superfamily. MetX family. As to quaternary structure, homodimer.

The protein localises to the cytoplasm. The enzyme catalyses L-homoserine + acetyl-CoA = O-acetyl-L-homoserine + CoA. The protein operates within amino-acid biosynthesis; L-methionine biosynthesis via de novo pathway; O-acetyl-L-homoserine from L-homoserine: step 1/1. Transfers an acetyl group from acetyl-CoA to L-homoserine, forming acetyl-L-homoserine. This Clavibacter michiganensis subsp. michiganensis (strain NCPPB 382) protein is Homoserine O-acetyltransferase.